The sequence spans 62 residues: Sec-independent protein translocase protein TatAc (62 aa).

The chain crosses the membrane as a helical span at residues 8–28 (ILVILFVGFLVFGPDKLPALG).

The protein belongs to the TatA/E family. As to quaternary structure, forms a complex with TatC.

The protein localises to the cell membrane. Part of the twin-arginine translocation (Tat) system that transports large folded proteins containing a characteristic twin-arginine motif in their signal peptide across membranes. TatA could form the protein-conducting channel of the Tat system. This chain is Sec-independent protein translocase protein TatAc, found in Bacillus subtilis (strain 168).